Consider the following 442-residue polypeptide: Serine--tRNA ligase (442 aa).

249-251 is a binding site for L-serine; the sequence is TSE. 280 to 282 provides a ligand contact to ATP; the sequence is RSE. Residue glutamate 303 coordinates L-serine. Residue 367-370 participates in ATP binding; it reads EISS. Serine 402 lines the L-serine pocket.

It belongs to the class-II aminoacyl-tRNA synthetase family. Type-1 seryl-tRNA synthetase subfamily. Homodimer. The tRNA molecule binds across the dimer.

It localises to the cytoplasm. The enzyme catalyses tRNA(Ser) + L-serine + ATP = L-seryl-tRNA(Ser) + AMP + diphosphate + H(+). It catalyses the reaction tRNA(Sec) + L-serine + ATP = L-seryl-tRNA(Sec) + AMP + diphosphate + H(+). It functions in the pathway aminoacyl-tRNA biosynthesis; selenocysteinyl-tRNA(Sec) biosynthesis; L-seryl-tRNA(Sec) from L-serine and tRNA(Sec): step 1/1. In terms of biological role, catalyzes the attachment of serine to tRNA(Ser). Is also able to aminoacylate tRNA(Sec) with serine, to form the misacylated tRNA L-seryl-tRNA(Sec), which will be further converted into selenocysteinyl-tRNA(Sec). The sequence is that of Serine--tRNA ligase from Acidovorax ebreus (strain TPSY) (Diaphorobacter sp. (strain TPSY)).